We begin with the raw amino-acid sequence, 92 residues long: Acylphosphatase (92 aa).

Residues 5-92 form the Acylphosphatase-like domain; the sequence is QVQLFVRGRV…GDFFDFRITD (88 aa). Active-site residues include R20 and N38.

It belongs to the acylphosphatase family.

It carries out the reaction an acyl phosphate + H2O = a carboxylate + phosphate + H(+). In Sorangium cellulosum (strain So ce56) (Polyangium cellulosum (strain So ce56)), this protein is Acylphosphatase (acyP).